A 76-amino-acid chain; its full sequence is Dermaseptin-SP2 (76 aa).

A signal peptide spans 1-22 (MAFLKKSLFLVLFLGLVSLSIC). The propeptide occupies 23–45 (EEEKRENEDEEEQEDEEQSEEKR). The interval 24 to 44 (EEKRENEDEEEQEDEEQSEEK) is disordered. Over residues 30–41 (EDEEEQEDEEQS) the composition is skewed to acidic residues. The residue at position 73 (Gln-73) is a Glutamine amide. The propeptide occupies 74–76 (GEQ).

Expressed by the skin glands.

It is found in the secreted. Its subcellular location is the target cell membrane. In terms of biological role, antimicrobial peptide with activity against Gram-positive and Gram-negative bacteria and fungi. Has been tested against E.coli (MIC=2.68-8 uM), S.aureus (ATCC 25923, MIC=2.68-8 uM), S.aureus (ATCC oxacillin resistant, MIC=2.68 uM), K.pneumoniae (MIC=10.71 uM) and C.albicans (MIC=10.71-32 uM). Probably acts by disturbing membrane functions with its alpha-helical amphipathic structure. May penetrate bacterial membranes, but stay at the mammalian membrane surface. Shows a very weak hemolytic activity. The sequence is that of Dermaseptin-SP2 from Agalychnis spurrelli (Gliding leaf frog).